The following is a 195-amino-acid chain: dTTP/UTP pyrophosphatase (195 aa).

The Proton acceptor role is filled by aspartate 73.

The protein belongs to the Maf family. YhdE subfamily. The cofactor is a divalent metal cation.

It localises to the cytoplasm. The catalysed reaction is dTTP + H2O = dTMP + diphosphate + H(+). It carries out the reaction UTP + H2O = UMP + diphosphate + H(+). Nucleoside triphosphate pyrophosphatase that hydrolyzes dTTP and UTP. May have a dual role in cell division arrest and in preventing the incorporation of modified nucleotides into cellular nucleic acids. The sequence is that of dTTP/UTP pyrophosphatase from Deinococcus radiodurans (strain ATCC 13939 / DSM 20539 / JCM 16871 / CCUG 27074 / LMG 4051 / NBRC 15346 / NCIMB 9279 / VKM B-1422 / R1).